The chain runs to 396 residues: Phosphoglycerate kinase (396 aa).

Substrate contacts are provided by residues 23 to 25 (DFN), arginine 38, 61 to 64 (HMGK), arginine 122, and arginine 155. Residues lysine 206, glycine 296, glutamate 327, and 353 to 356 (GGDS) contribute to the ATP site.

It belongs to the phosphoglycerate kinase family. Monomer.

The protein localises to the cytoplasm. It carries out the reaction (2R)-3-phosphoglycerate + ATP = (2R)-3-phospho-glyceroyl phosphate + ADP. The protein operates within carbohydrate degradation; glycolysis; pyruvate from D-glyceraldehyde 3-phosphate: step 2/5. The sequence is that of Phosphoglycerate kinase from Clostridium botulinum (strain Eklund 17B / Type B).